The sequence spans 698 residues: MAADAHAALAATRNIGIMAHIDAGKTTTTERILFYTGVNYKIGEVHEGGATMDWMEQEQERGITITSAATTCSWRDHTINIIDTPGHVDFTVEVERSLRVLDGAVAVFDAVAGVEPQSETVWKQADRYDVPRIAFVNKMDRVGAEFHRCVDMMVDRLDATPAVIQLPWGVEADFRGVIDLIRMKGLLWHTEDKGASFETVDIPTDHAEAAQEWREKLVETVAENDDELMELYLEGVEPTEEQLMAALRRATVASKINPVLCGSAFKNKGVQPMLDAVVDFLPSPTDIGSVTGHSVGKEDTEVVRRADEDEPFSALAFKIMSDPYVGKLTYIRVYSGRITSGTAVLNSTKDRKERIGRILQMHANHREDRDGVGAGQIVAVVGLKNTTTGDTLCDPNSPVILESMIFPAPVIDVAIEPKTKADQQKLGTAIQRLTEEDPTFQVRTDEETGQTVIAGMGELHLEVFVDRMRREYGVEANVGKPQVAYRETIRRKVEKVDYTHKKQTGGSGQYARVIIDLEPSGGDGGGYEFENKVTGGRIPREFIPSVDAGCQEAMEFGVLAGYPLVDVKVTLRDGQFHEVDSSELAFKIAGSMAFKDAARKADPVILEPMMSVEVTTPEDHMGDVIGDLNSRRGQIQAMDERGGSRIVKALVPLSEMFGYVGDLRSKTSGRASYSMQFDSYAEVPQNVAKDIIAKARGE.

A tr-type G domain is found at 10 to 285 (AATRNIGIMA…AVVDFLPSPT (276 aa)). Residues 19 to 26 (AHIDAGKT), 83 to 87 (DTPGH), and 137 to 140 (NKMD) contribute to the GTP site.

It belongs to the TRAFAC class translation factor GTPase superfamily. Classic translation factor GTPase family. EF-G/EF-2 subfamily.

It localises to the cytoplasm. In terms of biological role, catalyzes the GTP-dependent ribosomal translocation step during translation elongation. During this step, the ribosome changes from the pre-translocational (PRE) to the post-translocational (POST) state as the newly formed A-site-bound peptidyl-tRNA and P-site-bound deacylated tRNA move to the P and E sites, respectively. Catalyzes the coordinated movement of the two tRNA molecules, the mRNA and conformational changes in the ribosome. This chain is Elongation factor G, found in Parafrankia sp. (strain EAN1pec).